A 491-amino-acid polypeptide reads, in one-letter code: Aspartyl/glutamyl-tRNA(Asn/Gln) amidotransferase subunit B (491 aa).

This sequence belongs to the GatB/GatE family. GatB subfamily. In terms of assembly, heterotrimer of A, B and C subunits.

The catalysed reaction is L-glutamyl-tRNA(Gln) + L-glutamine + ATP + H2O = L-glutaminyl-tRNA(Gln) + L-glutamate + ADP + phosphate + H(+). The enzyme catalyses L-aspartyl-tRNA(Asn) + L-glutamine + ATP + H2O = L-asparaginyl-tRNA(Asn) + L-glutamate + ADP + phosphate + 2 H(+). In terms of biological role, allows the formation of correctly charged Asn-tRNA(Asn) or Gln-tRNA(Gln) through the transamidation of misacylated Asp-tRNA(Asn) or Glu-tRNA(Gln) in organisms which lack either or both of asparaginyl-tRNA or glutaminyl-tRNA synthetases. The reaction takes place in the presence of glutamine and ATP through an activated phospho-Asp-tRNA(Asn) or phospho-Glu-tRNA(Gln). This is Aspartyl/glutamyl-tRNA(Asn/Gln) amidotransferase subunit B from Burkholderia ambifaria (strain ATCC BAA-244 / DSM 16087 / CCUG 44356 / LMG 19182 / AMMD) (Burkholderia cepacia (strain AMMD)).